The sequence spans 158 residues: Protein FAM177B (158 aa).

The segment covering 36 to 48 (EYSTEEEEEEEKE) has biased composition (acidic residues). Residues 36 to 59 (EYSTEEEEEEEKEEQSTNSTLDPS) form a disordered region.

The protein belongs to the FAM177 family.

The chain is Protein FAM177B (FAM177B) from Homo sapiens (Human).